A 314-amino-acid chain; its full sequence is Probable carboxylesterase 2 (314 aa).

An Involved in the stabilization of the negatively charged intermediate by the formation of the oxyanion hole motif is present at residues 79–81; the sequence is HGG. Active-site residues include Ser158, Asp254, and His286.

This sequence belongs to the 'GDXG' lipolytic enzyme family. In terms of tissue distribution, expressed in roots and flowers.

The enzyme catalyses a carboxylic ester + H2O = an alcohol + a carboxylate + H(+). Its function is as follows. Carboxylesterase acting on esters with varying acyl chain length. The chain is Probable carboxylesterase 2 (CXE2) from Arabidopsis thaliana (Mouse-ear cress).